The primary structure comprises 197 residues: Large ribosomal subunit protein bL25 (197 aa).

Belongs to the bacterial ribosomal protein bL25 family. CTC subfamily. Part of the 50S ribosomal subunit; part of the 5S rRNA/L5/L18/L25 subcomplex. Contacts the 5S rRNA. Binds to the 5S rRNA independently of L5 and L18.

This is one of the proteins that binds to the 5S RNA in the ribosome where it forms part of the central protuberance. The sequence is that of Large ribosomal subunit protein bL25 from Pseudomonas putida (strain GB-1).